We begin with the raw amino-acid sequence, 177 residues long: Large ribosomal subunit protein uL6 (177 aa).

It belongs to the universal ribosomal protein uL6 family. In terms of assembly, part of the 50S ribosomal subunit.

This protein binds to the 23S rRNA, and is important in its secondary structure. It is located near the subunit interface in the base of the L7/L12 stalk, and near the tRNA binding site of the peptidyltransferase center. The protein is Large ribosomal subunit protein uL6 of Neisseria meningitidis serogroup B (strain ATCC BAA-335 / MC58).